The primary structure comprises 248 residues: MTIQSTANHQDGYLPAILCLHGAGTNATIFNLQARTIVRCLKHKFRFIFVNAPFESLPGPGVIPTFAEIRPYLRWHCDENAIQEFDVSPELVDNERRLVRSMISDKIEQEATGPSLGIVGVMAFSQGTRVATGLCLDPEFGSSIQFAIIIAGTFPALSLENPVSDSETTNLFSGINGNKHEQLQIPSVHVQGTMDPWGPESARLLKECWSADLAMVVKFHGAHQVPTSKKDAQAVAQAVLSCWDSAQT.

Residues serine 125, aspartate 195, and histidine 223 each act as charge relay system in the active site.

This sequence belongs to the LovG family.

Its pathway is secondary metabolite biosynthesis. Thioesterase; part of the gene cluster that mediates the biosynthesis of fusarielins F, G and H, decaketide compounds with 5 methylations and a decaline core that act as mycoestrogens as they stimulate growth of MCF-7 breast cancer cells. The initial compound in the pathway is produced by the reducing polyketide synthase FSL1. FSL1 lacks an active enoyl reductase (ER) domain and biosynthesis of fusarielins relies on the trans-acting enoyl reductase FSL5, before it is released through hydrolysis catalyzed by the thioesterase FSL2. Fusarielins F, G, and H have a C11=C12 cis double bond and is fully reduced between C10 and C11 and between C12 and C13. FSL3 can be involved in the formation of the C11=C12 cis double bond by moving a hypothetical C10=C11 or C12=C13 trans double bond to form prefusarielin. Prefusarielin is oxygenated at C15 and C16 by the cytochrome P450 monooxygenase FSL4, resulting in fusarielin F, which subsequently is epoxidized into fusarielin G by the same enzyme. The final step in the pathway is a reduction of the carboxylic acid moiety to yield fusarielin H via a still undetermined mechanism. This Gibberella zeae (strain ATCC MYA-4620 / CBS 123657 / FGSC 9075 / NRRL 31084 / PH-1) (Wheat head blight fungus) protein is Thioesterase FSL2.